A 152-amino-acid polypeptide reads, in one-letter code: Probable flagellum biosynthesis repressor protein FlbT (152 aa).

This sequence belongs to the FlbT family.

Functionally, has a post-transcriptional repressor function in flagellum biogenesis. Associates with the 5'-UTR of fljK mRNA and promotes its degradation. The sequence is that of Probable flagellum biosynthesis repressor protein FlbT from Brucella canis (strain ATCC 23365 / NCTC 10854 / RM-666).